The primary structure comprises 153 residues: Histone H2B.8 (153 aa).

Composition is skewed to basic and acidic residues over residues 1–28 (MAPKAEKKPAAKKPAEEEPAAEKAEKAP) and 36–53 (EKRLPAGKGEKGSGEGKK). Positions 1–61 (MAPKAEKKPA…KKAGRKKAKK (61 aa)) are disordered. N6-acetyllysine occurs at positions 7 and 37. A Glycyl lysine isopeptide (Lys-Gly) (interchain with G-Cter in ubiquitin) cross-link involves residue lysine 149.

It belongs to the histone H2B family. As to quaternary structure, the nucleosome is a histone octamer containing two molecules each of H2A, H2B, H3 and H4 assembled in one H3-H4 heterotetramer and two H2A-H2B heterodimers. The octamer wraps approximately 147 bp of DNA. Post-translationally, can be acetylated to form H2BK6ac and H2BK33ac. Monoubiquitinated by BRE1 to form H2BK143ub1 and deubiquitinated by UBP26. Required for heterochromatic histone H3 di- and trimethylation at H3K4me. May give a specific tag for epigenetic transcriptional activation.

The protein resides in the nucleus. Its subcellular location is the chromosome. In terms of biological role, core component of nucleosome. Nucleosomes wrap and compact DNA into chromatin, limiting DNA accessibility to the cellular machineries which require DNA as a template. Histones thereby play a central role in transcription regulation, DNA repair, DNA replication and chromosomal stability. DNA accessibility is regulated via a complex set of post-translational modifications of histones, also called histone code, and nucleosome remodeling. This Oryza sativa subsp. indica (Rice) protein is Histone H2B.8 (H2B.8).